A 490-amino-acid chain; its full sequence is Bifunctional protein HldE (490 aa).

Residues 1-330 (MERKEIESLF…AEIGHAHPDS (330 aa)) are ribokinase. Residue 205–208 (NRKE) participates in ATP binding. Aspartate 275 is an active-site residue. The interval 356 to 490 (FTNGCFDLLH…EKIRTGSIKE (135 aa)) is cytidylyltransferase.

It in the N-terminal section; belongs to the carbohydrate kinase PfkB family. This sequence in the C-terminal section; belongs to the cytidylyltransferase family. In terms of assembly, homodimer.

It catalyses the reaction D-glycero-beta-D-manno-heptose 7-phosphate + ATP = D-glycero-beta-D-manno-heptose 1,7-bisphosphate + ADP + H(+). The catalysed reaction is D-glycero-beta-D-manno-heptose 1-phosphate + ATP + H(+) = ADP-D-glycero-beta-D-manno-heptose + diphosphate. Its pathway is nucleotide-sugar biosynthesis; ADP-L-glycero-beta-D-manno-heptose biosynthesis; ADP-L-glycero-beta-D-manno-heptose from D-glycero-beta-D-manno-heptose 7-phosphate: step 1/4. The protein operates within nucleotide-sugar biosynthesis; ADP-L-glycero-beta-D-manno-heptose biosynthesis; ADP-L-glycero-beta-D-manno-heptose from D-glycero-beta-D-manno-heptose 7-phosphate: step 3/4. Functionally, catalyzes the phosphorylation of D-glycero-D-manno-heptose 7-phosphate at the C-1 position to selectively form D-glycero-beta-D-manno-heptose-1,7-bisphosphate. Its function is as follows. Catalyzes the ADP transfer from ATP to D-glycero-beta-D-manno-heptose 1-phosphate, yielding ADP-D-glycero-beta-D-manno-heptose. The chain is Bifunctional protein HldE from Geotalea uraniireducens (strain Rf4) (Geobacter uraniireducens).